The primary structure comprises 194 residues: Endonuclease V (194 aa).

2 residues coordinate Mg(2+): Asp-31 and Glu-95.

Belongs to the endonuclease V family. The cofactor is Mg(2+).

It is found in the cytoplasm. The catalysed reaction is Endonucleolytic cleavage at apurinic or apyrimidinic sites to products with a 5'-phosphate.. Its function is as follows. DNA repair enzyme involved in the repair of deaminated bases. Selectively cleaves double-stranded DNA at the second phosphodiester bond 3' to a deoxyinosine leaving behind the intact lesion on the nicked DNA. The protein is Endonuclease V of Pyrococcus abyssi (strain GE5 / Orsay).